We begin with the raw amino-acid sequence, 348 residues long: Lysophosphatidic acid receptor 2 (348 aa).

Over 1–30 the chain is Extracellular; that stretch reads MGQCYYNETIGFFYNNSGKELSSHWRPKDV. 2 N-linked (GlcNAc...) asparagine glycosylation sites follow: Asn-7 and Asn-15. Residues 31-51 form a helical membrane-spanning segment; sequence VVVALGLTVSVLVLLTNLLVI. Topologically, residues 52-66 are cytoplasmic; that stretch reads AAIASNRRFHQPIYY. The chain crosses the membrane as a helical span at residues 67–87; sequence LLGNLAAADLFAGVAYLFLMF. Topologically, residues 88-100 are extracellular; that stretch reads HTGPRTARLSLEG. The helical transmembrane segment at 101–123 threads the bilayer; the sequence is WFLRQGLLDTSLTASVATLLAIA. The Cytoplasmic portion of the chain corresponds to 124 to 143; that stretch reads VERHRSVMAVQLHSRLPRGR. A helical transmembrane segment spans residues 144 to 164; it reads VVMLIVGVWVAALGLGLLPAH. Residues 165-185 lie on the Extracellular side of the membrane; that stretch reads SWHCLCALDRCSRMAPLLSRS. Residues 186–206 traverse the membrane as a helical segment; that stretch reads YLAVWALSSLLVFLLMVAVYT. At 207–239 the chain is on the cytoplasmic side; the sequence is RIFFYVRRRVQRMAEHVSCHPRYRETTLSLVKT. Residues 240–260 form a helical membrane-spanning segment; sequence VVIILGAFVVCWTPGQVVLLL. Topologically, residues 261–276 are extracellular; it reads DGLGCESCNVLAVEKY. The helical transmembrane segment at 277–294 threads the bilayer; that stretch reads FLLLAEANSLVNAAVYSC. The Cytoplasmic portion of the chain corresponds to 295–348; the sequence is RDAEMRRTFRRLLCCACLRQSTRESVHYTSSAQGGASTRIMLPENGHPLMDSTL. Cys-308 is lipidated: S-palmitoyl cysteine. Residues 345-348 carry the PDZ-binding motif; it reads DSTL.

The protein belongs to the G-protein coupled receptor 1 family. In terms of assembly, interacts with SLC9A3R2/NHERF2, MAGI3 and PLCB3. Interacts with RALA and GRK2. Expressed most abundantly in testes and peripheral blood leukocytes with less expression in pancreas, spleen, thymus and prostate. Little or no expression in heart, brain, placenta, lung, liver, skeletal muscle, kidney, ovary, small intestine, or colon.

The protein localises to the cell surface. It is found in the cell membrane. In terms of biological role, receptor for lysophosphatidic acid (LPA), a mediator of diverse cellular activities. Seems to be coupled to the G(i)/G(o), G(12)/G(13), and G(q) families of heteromeric G proteins. Plays a key role in phospholipase C-beta (PLC-beta) signaling pathway. Stimulates phospholipase C (PLC) activity in a manner that is independent of RALA activation. In Homo sapiens (Human), this protein is Lysophosphatidic acid receptor 2.